The sequence spans 1258 residues: Structural polyprotein (1258 aa).

Residues 41-75 are host transcription inhibition; that stretch reads PQAQQMQQLIAAVNTLAIRQNGTRTPGQQRRKRQP. A disordered region spans residues 59–114; the sequence is RQNGTRTPGQQRRKRQPNKPKRKQTPPKKQNPAKTKNKQKPQPPKPKKRKPGKRER. A Nuclear localization signal motif is present at residues 68 to 109; the sequence is QQRRKRQPNKPKRKQTPPKKQNPAKTKNKQKPQPPKPKKRKP. 2 stretches are compositionally biased toward basic residues: residues 69-84 and 93-114; these read QRRK…KQTP and TKNK…KRER. Residues 96–124 form a binding to the viral RNA region; the sequence is KQKPQPPKPKKRKPGKRERKCMKIENDCI. The ribosome-binding stretch occupies residues 109 to 123; sequence PGKRERKCMKIENDC. Residues Cys123 and Cys138 are joined by a disulfide bond. Residues 123–271 form the Peptidase S3 domain; sequence CIFEVKLEGK…RITPEGTEEW (149 aa). The Charge relay system role is filled by His149. The short motif at 154 to 164 is the Nuclear export signal element; that stretch reads IDNPDLAKLAF. Residues 165–170 form an interaction with spike glycoprotein E2 region; it reads KKSSKY. Asp171 serves as the catalytic Charge relay system. Residues 193–203 form a dimerization of the capsid protein region; that stretch reads PEGHYNWHHGA. The active-site Charge relay system is the Ser223. The segment at 229–233 is dimerization of the capsid protein; that stretch reads DNKGR. The segment at 272-284 is functions as an uncleaved signal peptide for the precursor of protein E3/E2; it reads TALVTTACILSNL. Disulfide bonds link Cys279-Cys288, Cys293-Cys297, Cys296-Cys328, Cys356-Cys462, Cys359-Cys365, Cys428-Cys442, Cys490-Cys601, Cys538-Cys562, and Cys540-Cys557. N-linked (GlcNAc...) asparagine; by host glycosylation is present at Asn283. Over 338 to 696 the chain is Extracellular; that stretch reads GLTEDYKAYK…PHEIFSYYYG (359 aa). Interaction with host Mxra8 receptor stretches follow at residues 363-366 and 399-401; these read QFCY and HSW. The segment at 521 to 524 is interaction with host Mxra8 receptor; that stretch reads TGNK. An N-linked (GlcNAc...) asparagine; by host glycan is attached at Asn537. The tract at residues 553 to 559 is interaction with host Mxra8 receptor; sequence EFDNCEV. An N-linked (GlcNAc...) asparagine; by host glycan is attached at Asn598. The helical transmembrane segment at 697–717 threads the bilayer; it reads LYPATTVAVCVGLACVILLAL. Over 718–758 the chain is Cytoplasmic; the sequence is SASCCLCVSARNKCLTPYALTPGAVVPCTLSLLCCAPRAKA. The interval 726-730 is interaction with the capsid protein; the sequence is SARNK. 3 S-palmitoyl cysteine; by host lipidation sites follow: Cys731, Cys751, and Cys752. Residues 731–751 form a transient transmembrane before p62-6K protein processing region; sequence CLTPYALTPGAVVPCTLSLLC. Cys731 and Cys752 form a disulfide bridge. Residues 759–773 are Extracellular-facing; sequence ATFAETAAYLWAENQ. Residues 774 to 794 traverse the membrane as a helical segment; the sequence is TVFWMQFAIPVACFMIVTYCL. Residues 795–796 lie on the Cytoplasmic side of the membrane; the sequence is RH. Residues 797-817 form a helical membrane-spanning segment; it reads LMLCCRTASFLVAVSLGMGAT. 2 consecutive stretches face the extracellular side: residues 818–819 and 820–1234; these read QA and YEHS…HTMG. 4 disulfides stabilise this stretch: Cys868–Cys933, Cys881–Cys913, Cys882–Cys915, and Cys887–Cys897. Positions 903 to 920 are E1 fusion peptide loop; sequence VYPFLWGGAYCFCDSENT. N-linked (GlcNAc...) asparagine; by host glycosylation is found at Asn960 and Asn1089. Disulfide bonds link Cys1078/Cys1090, Cys1120/Cys1195, Cys1125/Cys1199, and Cys1147/Cys1189. The helical transmembrane segment at 1235-1255 threads the bilayer; the sequence is GATVVIAIGITIFLIVTCIAF. Residue Cys1252 is the site of S-palmitoyl cysteine; by host attachment. The Cytoplasmic portion of the chain corresponds to 1256-1258; sequence SRH.

As to quaternary structure, homodimer. Homomultimer. Interacts with host karyopherin KPNA4; this interaction allows the nuclear import of the viral capsid protein. Interacts with spike glycoprotein E2. Interacts with host IRAK1; the interaction leads to inhibition of IRAK1-dependent signaling. The precursor of protein E3/E2 and E1 form a heterodimer shortly after synthesis. In terms of assembly, the precursor of protein E3/E2 and E1 form a heterodimer shortly after synthesis. Processing of the precursor of protein E3/E2 into E2 and E3 results in a heterodimer of the spike glycoproteins E2 and E1. Spike at virion surface are constituted of a trimer of E2-E1 heterodimers. After target cell attachment and endocytosis, E1 change conformation to form homotrimers. Interacts with 6K protein. As to quaternary structure, interacts with spike glycoprotein E1. Processing of the precursor of protein E3/E2 into E2 and E3 results in a heterodimer of the spike glycoproteins E2 and E1. Spike at virion surface are constituted of a trimer of E2-E1 heterodimers. Interacts with 6K protein. Interacts with host MXRA8; this interaction mediates virus entry. Oligomer. Interacts with spike glycoprotein E1. Interacts with spike glycoprotein E2. Structural polyprotein: Specific enzymatic cleavages in vivo yield mature proteins. Capsid protein is auto-cleaved during polyprotein translation, unmasking a signal peptide at the N-terminus of the precursor of E3/E2. The remaining polyprotein is then targeted to the host endoplasmic reticulum, where host signal peptidase cleaves it into pE2, 6K and E1 proteins. pE2 is further processed to mature E3 and E2 by host furin in trans-Golgi vesicle. In terms of processing, palmitoylated via thioester bonds. These palmitoylations may induce disruption of the C-terminus transmembrane. This would result in the reorientation of E2 C-terminus from lumenal to cytoplasmic side. Post-translationally, N-glycosylated. Palmitoylated via thioester bonds.

The protein localises to the virion. Its subcellular location is the host cytoplasm. The protein resides in the host cell membrane. It localises to the host nucleus. It is found in the virion membrane. The protein localises to the host Golgi apparatus. Its subcellular location is the host trans-Golgi network. The protein resides in the host endoplasmic reticulum. The catalysed reaction is Autocatalytic release of the core protein from the N-terminus of the togavirus structural polyprotein by hydrolysis of a -Trp-|-Ser- bond.. Forms an icosahedral capsid with a T=4 symmetry composed of 240 copies of the capsid protein surrounded by a lipid membrane through which penetrate 80 spikes composed of trimers of E1-E2 heterodimers. The capsid protein binds to the viral RNA genome at a site adjacent to a ribosome binding site for viral genome translation following genome release. Possesses a protease activity that results in its autocatalytic cleavage from the nascent structural protein. Following its self-cleavage, the capsid protein transiently associates with ribosomes, and within several minutes the protein binds to viral RNA and rapidly assembles into icosahedric core particles. The resulting nucleocapsid eventually associates with the cytoplasmic domain of the spike glycoprotein E2 at the cell membrane, leading to budding and formation of mature virions. In case of infection, new virions attach to target cells and after clathrin-mediated endocytosis their membrane fuses with the host endosomal membrane. This leads to the release of the nucleocapsid into the cytoplasm, followed by an uncoating event necessary for the genomic RNA to become accessible. The uncoating might be triggered by the interaction of capsid proteins with ribosomes. Binding of ribosomes would release the genomic RNA since the same region is genomic RNA-binding and ribosome-binding. Specifically inhibits interleukin-1 receptor-associated kinase 1/IRAK1-dependent signaling during viral entry, representing a means by which the alphaviruses may evade innate immune detection and activation prior to viral gene expression. Its function is as follows. Provides the signal sequence for the translocation of the precursor of protein E3/E2 to the host endoplasmic reticulum. Furin-cleaved E3 remains associated with spike glycoprotein E1 and mediates pH protection of the latter during the transport via the secretory pathway. After virion release from the host cell, the assembly protein E3 is gradually released in the extracellular space. In terms of biological role, plays a role in viral attachment to target host cell, by binding to the cell receptor MXRA8. Synthesized as a p62 precursor which is processed by furin at the cell membrane just before virion budding, giving rise to E2-E1 heterodimer. The p62-E1 heterodimer is stable, whereas E2-E1 is unstable and dissociate at low pH. p62 is processed at the last step, presumably to avoid E1 fusion activation before its final export to cell surface. E2 C-terminus contains a transitory transmembrane that would be disrupted by palmitoylation, resulting in reorientation of the C-terminal tail from lumenal to cytoplasmic side. This step is critical since E2 C-terminus is involved in budding by interacting with capsid proteins. This release of E2 C-terminus in cytoplasm occurs lately in protein export, and precludes premature assembly of particles at the endoplasmic reticulum membrane. Functionally, acts as a viroporin that participates in virus glycoprotein processing and transport to the plasma membrane, cell permeabilization and budding of viral particles. Disrupts the calcium homeostasis of the cell, probably at the endoplasmic reticulum level. This leads to cytoplasmic calcium elevation. Because of its lipophilic properties, the 6K protein is postulated to influence the selection of lipids that interact with the transmembrane domains of the glycoproteins, which, in turn, affects the deformability of the bilayer required for the extreme curvature that occurs as budding proceeds. Present in low amount in virions, about 3% compared to viral glycoproteins. Class II viral fusion protein. Fusion activity is inactive as long as E1 is bound to E2 in mature virion. After virus attachment to target cell and endocytosis, acidification of the endosome induce dissociation of E1/E2 heterodimer and concomitant trimerization of the E1 subunits. This E1 trimer is fusion active, and promotes release of viral nucleocapsid in cytoplasm after endosome and viral membrane fusion. Efficient fusion requires the presence of cholesterol and sphingolipid in the target membrane. The polypeptide is Structural polyprotein (Middelburg virus).